Here is a 1621-residue protein sequence, read N- to C-terminus: Lysophospholipase NTE1 (1621 aa).

Residues 1-12 are Cytoplasmic-facing; the sequence is MSSIPTPPDANG. Residues 13–33 form a helical membrane-spanning segment; that stretch reads NPLIALAVAVIYAILYVLQGV. Topologically, residues 34-59 are lumenal; it reads KYGVSLLTIGIPSCIVRMLQYSLTIS. The chain crosses the membrane as a helical span at residues 60 to 80; the sequence is LGFPHLLALFAGALLALFFLI. The Cytoplasmic portion of the chain corresponds to 81-1621; the sequence is RYRYLTRYAQ…RGNRLRRMSI (1541 aa). Disordered stretches follow at residues 188–209, 250–379, 545–566, 648–667, 711–735, 772–791, and 839–870; these read PDAS…TRPS, EGEE…SVPR, QTAT…LDET, WNLN…QRDD, VSAL…GSTR, DDEA…GASG, and FRST…ERPF. Low complexity-rich tracts occupy residues 195–209 and 348–361; these read TPTP…TRPS and RRSQ…RLNS. Residues 788–907 and 951–1070 each bind a nucleoside 3',5'-cyclic phosphate; these read GASG…GYLS and RLLS…IAGR. Positions 839 to 867 are enriched in polar residues; it reads FRSTSSNQENPNSTPGSKHRQSSFGSSNE. A PNPLA domain is found at 1316–1480; sequence LVLGGGGARG…MDNTPIQPLR (165 aa). The GXGXXG motif lies at 1320 to 1325; it reads GGGARG. Positions 1347–1351 match the GXSXG motif; that stretch reads GCSIG. The Nucleophile role is filled by Ser1349. Asp1467 serves as the catalytic Proton acceptor. The short motif at 1467–1469 is the DGA/G element; it reads DGG.

The protein belongs to the NTE family.

It is found in the endoplasmic reticulum membrane. The catalysed reaction is a 1-acyl-sn-glycero-3-phosphocholine + H2O = sn-glycerol 3-phosphocholine + a fatty acid + H(+). Its activity is regulated as follows. Inhibited by organophosphorus esters. Its function is as follows. Intracellular phospholipase B that catalyzes the double deacylation of phosphatidylcholine (PC) to glycerophosphocholine (GroPCho). Plays an important role in membrane lipid homeostasis. Responsible for the rapid PC turnover in response to inositol, elevated temperatures, or when choline is present in the growth medium. The protein is Lysophospholipase NTE1 (NTE1) of Cryptococcus neoformans var. neoformans serotype D (strain B-3501A) (Filobasidiella neoformans).